We begin with the raw amino-acid sequence, 356 residues long: Histidinol-phosphate aminotransferase (356 aa).

An N6-(pyridoxal phosphate)lysine modification is found at K217.

It belongs to the class-II pyridoxal-phosphate-dependent aminotransferase family. Histidinol-phosphate aminotransferase subfamily. As to quaternary structure, homodimer. The cofactor is pyridoxal 5'-phosphate.

It catalyses the reaction L-histidinol phosphate + 2-oxoglutarate = 3-(imidazol-4-yl)-2-oxopropyl phosphate + L-glutamate. It functions in the pathway amino-acid biosynthesis; L-histidine biosynthesis; L-histidine from 5-phospho-alpha-D-ribose 1-diphosphate: step 7/9. This is Histidinol-phosphate aminotransferase from Chromobacterium violaceum (strain ATCC 12472 / DSM 30191 / JCM 1249 / CCUG 213 / NBRC 12614 / NCIMB 9131 / NCTC 9757 / MK).